The primary structure comprises 287 residues: 4-diphosphocytidyl-2-C-methyl-D-erythritol kinase (287 aa).

Residue Lys-22 is part of the active site. Pro-102–Ser-112 contacts ATP. Asp-139 is an active-site residue.

This sequence belongs to the GHMP kinase family. IspE subfamily.

It carries out the reaction 4-CDP-2-C-methyl-D-erythritol + ATP = 4-CDP-2-C-methyl-D-erythritol 2-phosphate + ADP + H(+). It participates in isoprenoid biosynthesis; isopentenyl diphosphate biosynthesis via DXP pathway; isopentenyl diphosphate from 1-deoxy-D-xylulose 5-phosphate: step 3/6. Catalyzes the phosphorylation of the position 2 hydroxy group of 4-diphosphocytidyl-2C-methyl-D-erythritol. The protein is 4-diphosphocytidyl-2-C-methyl-D-erythritol kinase of Dinoroseobacter shibae (strain DSM 16493 / NCIMB 14021 / DFL 12).